A 332-amino-acid chain; its full sequence is Ketol-acid reductoisomerase (NADP(+)) (332 aa).

In terms of domain architecture, KARI N-terminal Rossmann spans 5-185 (VKVYYDDEVS…GCTRAGVIET (181 aa)). Residues 28–31 (YGNQ), Arg-51, Ser-56, and 86–89 (DLVQ) each bind NADP(+). Residue His-111 is part of the active site. Residue Gly-137 participates in NADP(+) binding. In terms of domain architecture, KARI C-terminal knotted spans 186–331 (TFKDETESDL…RFIRKMSGLE (146 aa)). Mg(2+) is bound by residues Asp-194, Glu-198, Glu-230, and Glu-234. Position 255 (Ser-255) interacts with substrate.

It belongs to the ketol-acid reductoisomerase family. It depends on Mg(2+) as a cofactor.

The enzyme catalyses (2R)-2,3-dihydroxy-3-methylbutanoate + NADP(+) = (2S)-2-acetolactate + NADPH + H(+). It carries out the reaction (2R,3R)-2,3-dihydroxy-3-methylpentanoate + NADP(+) = (S)-2-ethyl-2-hydroxy-3-oxobutanoate + NADPH + H(+). It participates in amino-acid biosynthesis; L-isoleucine biosynthesis; L-isoleucine from 2-oxobutanoate: step 2/4. Its pathway is amino-acid biosynthesis; L-valine biosynthesis; L-valine from pyruvate: step 2/4. Involved in the biosynthesis of branched-chain amino acids (BCAA). Catalyzes an alkyl-migration followed by a ketol-acid reduction of (S)-2-acetolactate (S2AL) to yield (R)-2,3-dihydroxy-isovalerate. In the isomerase reaction, S2AL is rearranged via a Mg-dependent methyl migration to produce 3-hydroxy-3-methyl-2-ketobutyrate (HMKB). In the reductase reaction, this 2-ketoacid undergoes a metal-dependent reduction by NADPH to yield (R)-2,3-dihydroxy-isovalerate. This chain is Ketol-acid reductoisomerase (NADP(+)), found in Pyrococcus abyssi (strain GE5 / Orsay).